We begin with the raw amino-acid sequence, 106 residues long: MRGNIAQLMQQAQKMQENLQRAQEELAKLEVTGSAGGGMVSVTLTGAKECRKVRIDPSILSDQEMAEDLIAAAFNDASNKIDAESKERMGSATAGMQLPPGMKLPF.

The tract at residues 82–106 (DAESKERMGSATAGMQLPPGMKLPF) is disordered.

Belongs to the YbaB/EbfC family. As to quaternary structure, homodimer.

It is found in the cytoplasm. The protein localises to the nucleoid. Functionally, binds to DNA and alters its conformation. May be involved in regulation of gene expression, nucleoid organization and DNA protection. The sequence is that of Nucleoid-associated protein XC_3243 from Xanthomonas campestris pv. campestris (strain 8004).